Consider the following 340-residue polypeptide: Glycerol-3-phosphate dehydrogenase [NAD(P)+] (340 aa).

The NADPH site is built by serine 14, phenylalanine 15, arginine 35, and lysine 108. The sn-glycerol 3-phosphate site is built by lysine 108 and glycine 136. Residue alanine 140 coordinates NADPH. 5 residues coordinate sn-glycerol 3-phosphate: lysine 191, aspartate 244, serine 254, arginine 255, and asparagine 256. Lysine 191 serves as the catalytic Proton acceptor. Residue arginine 255 coordinates NADPH. Glutamate 281 lines the NADPH pocket.

Belongs to the NAD-dependent glycerol-3-phosphate dehydrogenase family.

The protein localises to the cytoplasm. The enzyme catalyses sn-glycerol 3-phosphate + NAD(+) = dihydroxyacetone phosphate + NADH + H(+). The catalysed reaction is sn-glycerol 3-phosphate + NADP(+) = dihydroxyacetone phosphate + NADPH + H(+). It functions in the pathway membrane lipid metabolism; glycerophospholipid metabolism. Its function is as follows. Catalyzes the reduction of the glycolytic intermediate dihydroxyacetone phosphate (DHAP) to sn-glycerol 3-phosphate (G3P), the key precursor for phospholipid synthesis. The sequence is that of Glycerol-3-phosphate dehydrogenase [NAD(P)+] from Pseudomonas aeruginosa (strain LESB58).